We begin with the raw amino-acid sequence, 79 residues long: Small ribosomal subunit protein bS16 (79 aa).

The protein belongs to the bacterial ribosomal protein bS16 family.

In Buchnera aphidicola subsp. Acyrthosiphon pisum (strain 5A), this protein is Small ribosomal subunit protein bS16.